The chain runs to 711 residues: Polyribonucleotide nucleotidyltransferase (711 aa).

Residues aspartate 486 and aspartate 492 each coordinate Mg(2+). A KH domain is found at 553–612 (PRIHTIKISTDKIKDVIGKGGSVIRALTEETGTTIEIEDDGTVKIAATDGEKAKYAIRRI). The S1 motif domain maps to 622–690 (GRIYNSKVTR…RQGRVRLSIK (69 aa)). Residues 689-711 (IKEATEQSQPAAAPEAPASEQAE) are disordered. Over residues 694 to 711 (EQSQPAAAPEAPASEQAE) the composition is skewed to low complexity.

It belongs to the polyribonucleotide nucleotidyltransferase family. As to quaternary structure, component of the RNA degradosome, which is a multiprotein complex involved in RNA processing and mRNA degradation. It depends on Mg(2+) as a cofactor.

The protein localises to the cytoplasm. It catalyses the reaction RNA(n+1) + phosphate = RNA(n) + a ribonucleoside 5'-diphosphate. In terms of biological role, involved in mRNA degradation. Catalyzes the phosphorolysis of single-stranded polyribonucleotides processively in the 3'- to 5'-direction. This is Polyribonucleotide nucleotidyltransferase from Salmonella typhi.